The sequence spans 144 residues: Large ribosomal subunit protein uL15 (144 aa).

The segment at 1-53 (MRLNTLSPAEGAKHNAKRLGRGIGSGLGKTSGRGHKGQKARTGGGVRRGFEGG) is disordered. The span at 21 to 31 (RGIGSGLGKTS) shows a compositional bias: gly residues.

Belongs to the universal ribosomal protein uL15 family. As to quaternary structure, part of the 50S ribosomal subunit.

In terms of biological role, binds to the 23S rRNA. In Histophilus somni (strain 129Pt) (Haemophilus somnus), this protein is Large ribosomal subunit protein uL15.